Reading from the N-terminus, the 240-residue chain is L-isoleucine-4-hydroxylase (240 aa).

The Fe cation site is built by H159, D161, and H212.

It belongs to the iron/ascorbate-dependent oxidoreductase family. Requires L-ascorbate as cofactor. Fe(2+) is required as a cofactor.

The catalysed reaction is L-isoleucine + 2-oxoglutarate + O2 = (4S)-4-hydroxy-L-isoleucine + succinate + CO2. In terms of biological role, catalyzes the hydroxylation of L-isoleucine to produce (4S)-4-hydroxy-L-isoleucine. Can also catalyze the hydroxylation of L-leucine, L-norvaline, L-norleucine and L-allo-isoleucine, as well as the sulfoxidation of L-methionine, L-ethionine, S-methyl-L-cysteine, S-ethyl-L-cysteine, and S-allyl-L-cysteine. The protein is L-isoleucine-4-hydroxylase of Bacillus thuringiensis.